The sequence spans 112 residues: MKIKERLANQRKAINKTQAQMADEIGISLTSYKKYESGEGLPTMENLVKIADALEISIDELCGRWATDENQELMLRLKKIQQLDEEEQKAISMVLESMLIRHSTKSILNHGA.

In terms of domain architecture, HTH cro/C1-type spans 7-61 (LANQRKAINKTQAQMADEIGISLTSYKKYESGEGLPTMENLVKIADALEISIDEL). Residues 18–37 (QAQMADEIGISLTSYKKYES) constitute a DNA-binding region (H-T-H motif).

Transcriptional repressor of the integrated CTXPhi phage gene rstA2. The sequence is that of Cryptic phage CTXphi transcriptional repressor RstR (rstR1) from Vibrio cholerae serotype O1 (strain ATCC 39315 / El Tor Inaba N16961).